An 85-amino-acid polypeptide reads, in one-letter code: Insect toxin 2-53 (85 aa).

The N-terminal stretch at 1 to 21 (MKLLLLLIVSASMLIESLVNA) is a signal peptide. One can recognise an LCN-type CS-alpha/beta domain in the interval 22–82 (DGYIKRRDGC…TWKSETNTCG (61 aa)). Intrachain disulfides connect Cys-31/Cys-81, Cys-35/Cys-56, Cys-42/Cys-63, and Cys-46/Cys-65. Gly-82 carries the post-translational modification Glycine amide.

The protein belongs to the long (4 C-C) scorpion toxin superfamily. Sodium channel inhibitor family. Beta subfamily. As to expression, expressed by the venom gland.

Its subcellular location is the secreted. Its function is as follows. Depressant insect toxins cause a transient contraction paralysis followed by a slow flaccid paralysis. They bind voltage-independently to sodium channels (Nav) and block action potentials, primarily by depolarizing the axonal membrane and suppressing the sodium current. This chain is Insect toxin 2-53, found in Leiurus hebraeus (Hebrew deathstalker scorpion).